A 411-amino-acid chain; its full sequence is MDFEIENESEIPQLVDVEEVNTQPHSETLSVPTVSSNNDIDSFEQQSDFLLVDHDSTLDPVPVTILTGFLGAGKTSLLRSILENRNGKRVAVLMNEVGDSGDLERSLMEDVGGEELYEEWVALSNGCMCCTVKDNGIKALEKIMRQKGRFDNIVIETTGIANPGPLAQTFWLDDALKSDVKLDGIVTVIDCKNIDNILKDESDIGFIQISHADCLILNKTDLISSEALSVVRQTILKINCLAKIIETTYGRLDDISEILDLDAYGNENTSNLEWSIQRSNDSNINCSTCLDVDCQHLHSLDTHSLDISTHTFKLPPLMSKEVFQQFLQWVRHTLWSCLEEGEDEEFMIYRSKGIFNKDDGSWYIFQGVREVFEIMPLSEKPRAFLEKDIHPEIILIGRNLHRISPFVVGNQ.

Positions 9 to 16 (SEIPQLVD) match the psi-PxLVp motif motif. Residue 68–75 (GFLGAGKT) participates in GTP binding. Residues Cys-127, Cys-129, and Cys-130 each coordinate Zn(2+). The CXCC motif motif lies at 127 to 130 (CMCC). GTP is bound by residues 130–134 (CTVKD) and 218–221 (NKTD). The region spanning 307–411 (ISTHTFKLPP…RISPFVVGNQ (105 aa)) is the CobW C-terminal domain.

Belongs to the SIMIBI class G3E GTPase family. ZNG1 subfamily.

The catalysed reaction is GTP + H2O = GDP + phosphate + H(+). In terms of biological role, zinc chaperone that directly transfers zinc cofactor to target metalloproteins, thereby activating them. Catalyzes zinc insertion into the active site of methionine aminopeptidase map1, which function to cleave the initiator methionine from polypeptides during or after protein translation. Mechanistically, the N-terminal psi-PxLVp motif binds to the C6H2-type zinc finger of inactive form of map1. After formation of the docked complex, zinc is transferred from the CXCC motif in the GTPase domain of zng1 to the zinc binding site in the peptidase domain of map1 in a process requiring GTP hydrolysis. GTP/GDP exchange is required for release of active map1. This Schizosaccharomyces pombe (strain 972 / ATCC 24843) (Fission yeast) protein is Zinc-regulated GTPase metalloprotein activator 1 (zng1).